The chain runs to 297 residues: Putative S-adenosyl-L-methionine-dependent methyltransferase Mjls_1072 (297 aa).

S-adenosyl-L-methionine-binding positions include D124 and 153–154 (DL).

Belongs to the UPF0677 family.

Its function is as follows. Exhibits S-adenosyl-L-methionine-dependent methyltransferase activity. This chain is Putative S-adenosyl-L-methionine-dependent methyltransferase Mjls_1072, found in Mycobacterium sp. (strain JLS).